The primary structure comprises 227 residues: Urease accessory protein UreF 2 (227 aa).

It belongs to the UreF family. In terms of assembly, ureD, UreF and UreG form a complex that acts as a GTP-hydrolysis-dependent molecular chaperone, activating the urease apoprotein by helping to assemble the nickel containing metallocenter of UreC. The UreE protein probably delivers the nickel.

The protein resides in the cytoplasm. In terms of biological role, required for maturation of urease via the functional incorporation of the urease nickel metallocenter. This Brucella anthropi (strain ATCC 49188 / DSM 6882 / CCUG 24695 / JCM 21032 / LMG 3331 / NBRC 15819 / NCTC 12168 / Alc 37) (Ochrobactrum anthropi) protein is Urease accessory protein UreF 2.